Here is a 210-residue protein sequence, read N- to C-terminus: Rho-related GTP-binding protein RhoD (210 aa).

Position 24–31 (24–31 (GDGGCGKT)) interacts with GTP. The Effector region signature appears at 46 to 54 (YTPTVFERY). GTP-binding positions include 71–75 (DTAGQ) and 129–132 (CKTD). C207 is subject to Cysteine methyl ester. Residue C207 is the site of S-geranylgeranyl cysteine attachment. Residues 208–210 (VVT) constitute a propeptide, removed in mature form.

It belongs to the small GTPase superfamily. Rho family. As to quaternary structure, interacts (in GTP-bound form) with DIAPH2 isoform 3, DAPK3, FILIP1 and WHAMM. Interacts with PAK5. Interacts (independent of GTP-loaded status) with ANKFY1. Heart, placenta, liver, skeletal muscle, and pancreas and, with weaker intensity, in several other tissues.

The protein localises to the cell membrane. It is found in the early endosome. In terms of biological role, involved in endosome dynamics. May coordinate membrane transport with the function of the cytoskeleton. Involved in the internalization and trafficking of activated tyrosine kinase receptors such as PDGFRB. Participates in the reorganization of actin cytoskeleton; the function seems to involve WHAMM and includes regulation of filopodia formation and actin filament bundling. Can modulate the effect of DAPK3 in reorganization of actin cytoskeleton and focal adhesion dissolution. This is Rho-related GTP-binding protein RhoD from Homo sapiens (Human).